A 178-amino-acid polypeptide reads, in one-letter code: Glucagon-2 (178 aa).

A signal peptide spans 1–21 (MFGIHSLAGVLLLVIVQSQLA). Propeptides lie at residues 83–87 (SGAPS), 123–134 (ESAEESMNGPMS), and 171–178 (SNKRQEDH).

Belongs to the glucagon family.

It localises to the secreted. Promotes hydrolysis of glycogen and lipids, and raises the blood sugar level. In Oncorhynchus mykiss (Rainbow trout), this protein is Glucagon-2 (gcg2).